Reading from the N-terminus, the 300-residue chain is Inosose dehydratase (300 aa).

This sequence belongs to the IolE/MocC family. Requires glutathione as cofactor. Co(2+) serves as cofactor. The cofactor is Mn(2+).

It catalyses the reaction scyllo-inosose = 3D-3,5/4-trihydroxycyclohexane-1,2-dione + H2O. The protein operates within polyol metabolism; myo-inositol degradation into acetyl-CoA; acetyl-CoA from myo-inositol: step 2/7. In terms of biological role, catalyzes the dehydration of inosose (2-keto-myo-inositol, 2KMI or 2,4,6/3,5-pentahydroxycyclohexanone) to 3D-(3,5/4)-trihydroxycyclohexane-1,2-dione (D-2,3-diketo-4-deoxy-epi-inositol). In Lactiplantibacillus plantarum (strain ATCC BAA-793 / NCIMB 8826 / WCFS1) (Lactobacillus plantarum), this protein is Inosose dehydratase.